Reading from the N-terminus, the 366-residue chain is Probable trehalose-phosphate phosphatase 3 (366 aa).

The protein belongs to the trehalose phosphatase family. The cofactor is a divalent metal cation.

It carries out the reaction alpha,alpha-trehalose 6-phosphate + H2O = alpha,alpha-trehalose + phosphate. It functions in the pathway glycan biosynthesis; trehalose biosynthesis. In terms of biological role, removes the phosphate from trehalose 6-phosphate to produce free trehalose. Trehalose accumulation in plant may improve abiotic stress tolerance. This chain is Probable trehalose-phosphate phosphatase 3 (TPP3), found in Oryza sativa subsp. japonica (Rice).